The primary structure comprises 387 residues: MGRVGVLLLNLGGPERLEDVGPFLYNLFADPEIIRLPFPWLQKPLAWLISSLRTRKSQENYKQIGGGSPLRRITEEQATALRQSLSDRGQAAQVYIGMRYWHPFTEEAIAQIKADGIDRLVILPLYPQFSISTSGSSFRLLQRLRDRDPEFQKIDCSVVPSWYERSGYLQAMAELIAQELDKLEQPEQGHVFFSAHGVPVSYVEEAGDPYQREIEDCTRKIMETLGRSNPWTLAYQSRVGPVEWLQPYTEDALEELAERGVKDLVVVPISFVSEHIETLEEIDIEYREIAEEAGIERFLRVPALNTHPLFIQDLSDLVEQTLEQPRFRLEDVTLLPKKVKLYPQERWEWGITLNAEVWNGRIAMLGFLALLVELLTGRGPLHALGLL.

Histidine 196 and glutamate 277 together coordinate Fe cation.

This sequence belongs to the ferrochelatase family.

Its subcellular location is the cytoplasm. It carries out the reaction heme b + 2 H(+) = protoporphyrin IX + Fe(2+). Its pathway is porphyrin-containing compound metabolism; protoheme biosynthesis; protoheme from protoporphyrin-IX: step 1/1. In terms of biological role, catalyzes the ferrous insertion into protoporphyrin IX. The polypeptide is Ferrochelatase (Synechococcus elongatus (strain ATCC 33912 / PCC 7942 / FACHB-805) (Anacystis nidulans R2)).